The sequence spans 209 residues: MNIANYTLKVKGKTLLQDTDLHFSSGKINHVVGKNGVGKSQLAKDFLLNNSKRIGRDIRQNVSLISSSSNIPNDVSKDFLLHFLSKKFDAKMIDKIAYLLNLDNIDGKVLIKNLSDGQKQKLKLLSFLLEDKNIIVLDEITNSLDKKTVIEIHGFLNKYIQENPEKIIINITHDLSDLKAIEGDYYIFNHQEIQQYHSVDKLIEVYINE.

The ABC transporter domain maps to Met1–Ile207. An ATP-binding site is contributed by Gly33–Ser40.

It belongs to the ABC transporter superfamily. The complex is composed of two ATP-binding proteins (YydI), two transmembrane proteins (YydJ).

In terms of biological role, suggested to be part of an ABC transporter complex YydIJ involved in export of the modified peptide YydF. Responsible for energy coupling to the transport system. This is Probable peptide export ATP-binding protein YydI (yydI) from Bacillus subtilis (strain 168).